Consider the following 606-residue polypeptide: Sulfite reductase [NADPH] flavoprotein alpha-component (606 aa).

The Flavodoxin-like domain occupies 64-202 (VTLISASQTG…QAQQWRQQVV (139 aa)). Residues 70–75 (SQTGNA), 117–120 (STQG), and 153–162 (LGDTSYEHFC) each bind FMN. Residues 212-234 (QSTAPTQSTTPAAAAITSGGTTT) are compositionally biased toward low complexity. Residues 212–235 (QSTAPTQSTTPAAAAITSGGTTTV) form a disordered region. Positions 241 to 455 (TAPLTAQLSV…IEHNDNFRLP (215 aa)) constitute an FAD-binding FR-type domain. FAD contacts are provided by residues threonine 329, lysine 363, 393–396 (RLYS), 411–413 (TVG), tyrosine 417, and 426–429 (GGAS). NADP(+)-binding positions include 526-527 (SR), 532-536 (KIYVQ), and aspartate 568. Tyrosine 606 is a binding site for FAD.

It belongs to the NADPH-dependent sulphite reductase flavoprotein subunit CysJ family. This sequence in the N-terminal section; belongs to the flavodoxin family. In the C-terminal section; belongs to the flavoprotein pyridine nucleotide cytochrome reductase family. Alpha(8)-beta(8). The alpha component is a flavoprotein, the beta component is a hemoprotein. Requires FAD as cofactor. FMN is required as a cofactor.

It carries out the reaction hydrogen sulfide + 3 NADP(+) + 3 H2O = sulfite + 3 NADPH + 4 H(+). It functions in the pathway sulfur metabolism; hydrogen sulfide biosynthesis; hydrogen sulfide from sulfite (NADPH route): step 1/1. Its function is as follows. Component of the sulfite reductase complex that catalyzes the 6-electron reduction of sulfite to sulfide. This is one of several activities required for the biosynthesis of L-cysteine from sulfate. The flavoprotein component catalyzes the electron flow from NADPH -&gt; FAD -&gt; FMN to the hemoprotein component. In Yersinia pestis bv. Antiqua (strain Antiqua), this protein is Sulfite reductase [NADPH] flavoprotein alpha-component.